Reading from the N-terminus, the 33-residue chain is Photosystem II reaction center protein Psb30 (33 aa).

A helical transmembrane segment spans residues 7-27 (IQLGSLTLITLTGPLIIGIIF).

The protein belongs to the Psb30/Ycf12 family. As to quaternary structure, PSII is composed of 1 copy each of membrane proteins PsbA, PsbB, PsbC, PsbD, PsbE, PsbF, PsbH, PsbI, PsbJ, PsbK, PsbL, PsbM, PsbT, PsbY, PsbZ, Psb30/Ycf12, peripheral proteins of the oxygen-evolving complex and a large number of cofactors. It forms dimeric complexes.

The protein localises to the plastid. Its subcellular location is the chloroplast thylakoid membrane. Functionally, a core subunit of photosystem II (PSII), probably helps stabilize the reaction center. In Euglena gracilis, this protein is Photosystem II reaction center protein Psb30.